The primary structure comprises 225 residues: CRISPR pre-crRNA endoribonuclease Cas5d (225 aa).

The protein belongs to the CRISPR-associated protein Cas5 family. Subtype I-C/Dvulg subfamily. Requires Does not require a metal cofactor. as cofactor.

Its function is as follows. CRISPR (clustered regularly interspaced short palindromic repeat) is an adaptive immune system that provides protection against mobile genetic elements (viruses, transposable elements and conjugative plasmids). CRISPR clusters contain spacers, sequences complementary to antecedent mobile elements, and target invading nucleic acids. CRISPR clusters are transcribed and processed into CRISPR RNA (crRNA). This protein is a sequence-specific endonuclease that cleaves pre-crRNA at G21 into mature crRNA. Does not cleave pre-crRNA associated with the T.thermophilus strain HB27 Cas5 protein (AC Q746C2) CRISPR locus. The reaction mechanism may proceed by an intramolecular attack of the 2'-hydroxyl group of G21 on the scissile phosphodiester, cutting the precursor 3' to G21 residue yielding 5'-hydroxyl and 2' and/or 3' ends lacking a hydroxyl group (perhaps a 2'/3' cyclic phosphodiester). This Mannheimia succiniciproducens (strain KCTC 0769BP / MBEL55E) protein is CRISPR pre-crRNA endoribonuclease Cas5d.